Consider the following 717-residue polypeptide: MIHAGNAITVQMLADGIAEFRFDLQGESVNKFNRATIEDFKAAIAAVKANNDIKGLVVTSGKSTFIVGADITEFGQNFAQGEKAIVDWLMPVHEIFNSFEDLDLPKVAAINGIALGGGFEMCLVCDYRVMSEAAQVGLPEIKLGIYPGFGGSVRLSRLIGIDNAVEWMAMATPKKPAAALKDGAVDAVVAADKLLDAATDLVKQAISGRLNWKAKRQEKLEAVKLNPLEQMMAFNTAKGAVLAKANPAQYPAPKLLLDSLQAGASLARDEALKAEAEGFAKAAVTPQAEALIGLFINDQVVKKASKQHEKGAHPVNQAAVLGAGIMGGGIAYQAASKGTPIIMKDIGNPQLALGMKEANNLLTKQVERKKMKPAQMGETLARIRPTLSYEEFKEVDIVIEAVTENPKVKEIVLAETEKNVRENTIIASNTSTISITRLAKALQRPENFVGMHFFNPVHMMPLVEVIRGEKTSEEAIATTVVLAQKMGKTPIVVNDCPGFLVNRVLFPYFGAFDLLVKDGADFQQIDNVMSKFGWPMGPAYLIDVVGIDTGVHGAEVMAEGFPDRMKPDYKGAIEAMYEAKRLGQKNDVGFYKYELDKKGKKAKTVDPTAYEVIAPFVTGEKREFDNQEIIDRMMLALCNETARCLEDNIVATASEADMAMIMGIGFPPFRGGPCRYIDQTGVAEYVALCDKYAHLGKAYEAPQMLRDMAANNKKFYG.

Residues M1–A190 form an enoyl-CoA hydratase/isomerase region. Position 298 (D298) interacts with substrate. Residues H313–G717 form a 3-hydroxyacyl-CoA dehydrogenase region. Residues M326, D345, V402–E404, K409, and S431 each bind NAD(+). Catalysis depends on H452, which acts as the For 3-hydroxyacyl-CoA dehydrogenase activity. N455 lines the NAD(+) pocket. N502 serves as a coordination point for substrate.

The protein in the N-terminal section; belongs to the enoyl-CoA hydratase/isomerase family. It in the C-terminal section; belongs to the 3-hydroxyacyl-CoA dehydrogenase family. Heterotetramer of two alpha chains (FadB) and two beta chains (FadA).

It catalyses the reaction a (3S)-3-hydroxyacyl-CoA + NAD(+) = a 3-oxoacyl-CoA + NADH + H(+). The enzyme catalyses a (3S)-3-hydroxyacyl-CoA = a (2E)-enoyl-CoA + H2O. The catalysed reaction is a 4-saturated-(3S)-3-hydroxyacyl-CoA = a (3E)-enoyl-CoA + H2O. It carries out the reaction (3S)-3-hydroxybutanoyl-CoA = (3R)-3-hydroxybutanoyl-CoA. It catalyses the reaction a (3Z)-enoyl-CoA = a 4-saturated (2E)-enoyl-CoA. The enzyme catalyses a (3E)-enoyl-CoA = a 4-saturated (2E)-enoyl-CoA. Its pathway is lipid metabolism; fatty acid beta-oxidation. Its function is as follows. Involved in the aerobic and anaerobic degradation of long-chain fatty acids via beta-oxidation cycle. Catalyzes the formation of 3-oxoacyl-CoA from enoyl-CoA via L-3-hydroxyacyl-CoA. It can also use D-3-hydroxyacyl-CoA and cis-3-enoyl-CoA as substrate. This is Fatty acid oxidation complex subunit alpha from Acinetobacter baumannii (strain SDF).